Consider the following 218-residue polypeptide: Protein THO1 (218 aa).

Residues 4–38 (YSSLTVVQLKDLLTKRNLSVGGLKNELVQRLIKDD) form the SAP domain. The residue at position 22 (Ser-22) is a Phosphoserine. Disordered stretches follow at residues 37–123 (DDEE…LSPE) and 177–218 (LVSR…GYRR). Polar residues predominate over residues 47–57 (VSPQEQNQEQG). Phosphoserine occurs at positions 58 and 68. The segment covering 72–96 (TEKKEVSSEPKETNEPKEENKDVQK) has biased composition (basic and acidic residues). 2 stretches are compositionally biased toward low complexity: residues 102–122 (SATA…ALSP) and 186–203 (SGNN…NNRS). Over residues 204 to 218 (RVSKNRRGNRSGYRR) the composition is skewed to basic residues.

The protein belongs to the SAP domain-containing ribonucleoprotein family. Interacts with SUB2 in the presence of RNA; this interaction facilitates RNA binding of SUB2.

Facilitates RNA binding of SUB2 and likely plays a role in mRNA export. Suppressor of the transcriptional defect of HPR1 by overexpression. The sequence is that of Protein THO1 (THO1) from Saccharomyces cerevisiae (strain ATCC 204508 / S288c) (Baker's yeast).